A 354-amino-acid polypeptide reads, in one-letter code: Photosystem II D2 protein (354 aa).

Thr2 bears the N-acetylthreonine mark. A Phosphothreonine modification is found at Thr2. Residues 42-62 (CAYFALGGWFTGTTFVTSWYT) form a helical membrane-spanning segment. His119 is a binding site for chlorophyll a. The helical transmembrane segment at 126–142 (GFMLRQFELARSVQLRP) threads the bilayer. Residues Gln131 and Asn144 each contribute to the pheophytin a site. Residues 154-167 (VFVSVFLIYPLGQS) traverse the membrane as a helical segment. His199 is a binding site for chlorophyll a. The helical transmembrane segment at 209-229 (AALLCAIHGATVENTLFEDGD) threads the bilayer. Residues His216 and Phe263 each contribute to the a plastoquinone site. His216 is a Fe cation binding site. Fe cation is bound at residue His270. A helical transmembrane segment spans residues 280-296 (GLWMSALGVVGLALNLR).

Belongs to the reaction center PufL/M/PsbA/D family. In terms of assembly, PSII is composed of 1 copy each of membrane proteins PsbA, PsbB, PsbC, PsbD, PsbE, PsbF, PsbH, PsbI, PsbJ, PsbK, PsbL, PsbM, PsbT, PsbX, PsbY, PsbZ, Psb30/Ycf12, at least 3 peripheral proteins of the oxygen-evolving complex and a large number of cofactors. It forms dimeric complexes. The cofactor is The D1/D2 heterodimer binds P680, chlorophylls that are the primary electron donor of PSII, and subsequent electron acceptors. It shares a non-heme iron and each subunit binds pheophytin, quinone, additional chlorophylls, carotenoids and lipids. There is also a Cl(-1) ion associated with D1 and D2, which is required for oxygen evolution. The PSII complex binds additional chlorophylls, carotenoids and specific lipids..

It is found in the plastid. The protein resides in the chloroplast thylakoid membrane. The catalysed reaction is 2 a plastoquinone + 4 hnu + 2 H2O = 2 a plastoquinol + O2. Its function is as follows. Photosystem II (PSII) is a light-driven water:plastoquinone oxidoreductase that uses light energy to abstract electrons from H(2)O, generating O(2) and a proton gradient subsequently used for ATP formation. It consists of a core antenna complex that captures photons, and an electron transfer chain that converts photonic excitation into a charge separation. The D1/D2 (PsbA/PsbD) reaction center heterodimer binds P680, the primary electron donor of PSII as well as several subsequent electron acceptors. D2 is needed for assembly of a stable PSII complex. In Piper cenocladum (Ant piper), this protein is Photosystem II D2 protein.